Consider the following 876-residue polypeptide: Leucine--tRNA ligase (876 aa).

Residues 43-53 (PYPSGRIHMGH) carry the 'HIGH' region motif. Positions 632–636 (KMSKS) match the 'KMSKS' region motif. Residue Lys635 participates in ATP binding.

Belongs to the class-I aminoacyl-tRNA synthetase family.

It is found in the cytoplasm. It carries out the reaction tRNA(Leu) + L-leucine + ATP = L-leucyl-tRNA(Leu) + AMP + diphosphate. This Rhizobium etli (strain ATCC 51251 / DSM 11541 / JCM 21823 / NBRC 15573 / CFN 42) protein is Leucine--tRNA ligase.